We begin with the raw amino-acid sequence, 154 residues long: Myoglobin-2 (154 aa).

Residues 2–148 (GLSDGEWQLV…FRKDIATKYK (147 aa)) enclose the Globin domain. Residue H65 coordinates nitrite. H65 lines the O2 pocket. A heme b-binding site is contributed by H94.

This sequence belongs to the globin family. In terms of assembly, monomeric.

It is found in the cytoplasm. Its subcellular location is the sarcoplasm. The catalysed reaction is Fe(III)-heme b-[protein] + nitric oxide + H2O = Fe(II)-heme b-[protein] + nitrite + 2 H(+). It carries out the reaction H2O2 + AH2 = A + 2 H2O. Its function is as follows. Monomeric heme protein which primary function is to store oxygen and facilitate its diffusion within muscle tissues. Reversibly binds oxygen through a pentacoordinated heme iron and enables its timely and efficient release as needed during periods of heightened demand. Depending on the oxidative conditions of tissues and cells, and in addition to its ability to bind oxygen, it also has a nitrite reductase activity whereby it regulates the production of bioactive nitric oxide. Under stress conditions, like hypoxia and anoxia, it also protects cells against reactive oxygen species thanks to its pseudoperoxidase activity. The sequence is that of Myoglobin-2 (MB2) from Stenella attenuata (Pantropical spotted dolphin).